The primary structure comprises 154 residues: Transcriptional repressor NrdR (154 aa).

A zinc finger spans residues 3–34 (CPFCGANDTKVIDSRLVAEGEQVRRRRECLAC). Positions 49-139 (PRLIKQDGSR…VYRRFQDLNE (91 aa)) constitute an ATP-cone domain.

Belongs to the NrdR family. Requires Zn(2+) as cofactor.

Negatively regulates transcription of bacterial ribonucleotide reductase nrd genes and operons by binding to NrdR-boxes. In Pseudomonas savastanoi pv. phaseolicola (strain 1448A / Race 6) (Pseudomonas syringae pv. phaseolicola (strain 1448A / Race 6)), this protein is Transcriptional repressor NrdR.